Here is a 205-residue protein sequence, read N- to C-terminus: Small ribosomal subunit protein uS3c (205 aa).

Positions Ile-37–Ser-106 constitute a KH type-2 domain.

Belongs to the universal ribosomal protein uS3 family. In terms of assembly, part of the 30S ribosomal subunit.

The protein localises to the plastid. The protein resides in the chloroplast. This is Small ribosomal subunit protein uS3c (rps3) from Cyanidioschyzon merolae (strain NIES-3377 / 10D) (Unicellular red alga).